Here is a 188-residue protein sequence, read N- to C-terminus: Acireductone dioxygenase (188 aa).

4 residues coordinate Fe(2+): histidine 97, histidine 99, glutamate 103, and histidine 141. The Ni(2+) site is built by histidine 97, histidine 99, glutamate 103, and histidine 141.

It belongs to the acireductone dioxygenase (ARD) family. Monomer. Fe(2+) serves as cofactor. Ni(2+) is required as a cofactor.

It catalyses the reaction 1,2-dihydroxy-5-(methylsulfanyl)pent-1-en-3-one + O2 = 3-(methylsulfanyl)propanoate + CO + formate + 2 H(+). The enzyme catalyses 1,2-dihydroxy-5-(methylsulfanyl)pent-1-en-3-one + O2 = 4-methylsulfanyl-2-oxobutanoate + formate + 2 H(+). Its pathway is amino-acid biosynthesis; L-methionine biosynthesis via salvage pathway; L-methionine from S-methyl-5-thio-alpha-D-ribose 1-phosphate: step 5/6. Its function is as follows. Catalyzes 2 different reactions between oxygen and the acireductone 1,2-dihydroxy-3-keto-5-methylthiopentene (DHK-MTPene) depending upon the metal bound in the active site. Fe-containing acireductone dioxygenase (Fe-ARD) produces formate and 2-keto-4-methylthiobutyrate (KMTB), the alpha-ketoacid precursor of methionine in the methionine recycle pathway. Ni-containing acireductone dioxygenase (Ni-ARD) produces methylthiopropionate, carbon monoxide and formate, and does not lie on the methionine recycle pathway. The sequence is that of Acireductone dioxygenase from Xanthomonas axonopodis pv. citri (strain 306).